Here is a 390-residue protein sequence, read N- to C-terminus: GTPase Obg (390 aa).

Residues 1–159 (MKFVDEASIL…RDLLLELMLL (159 aa)) enclose the Obg domain. The tract at residues 127–147 (NTRFKSSVNRTPRQKTNGTPG) is disordered. Over residues 129 to 145 (RFKSSVNRTPRQKTNGT) the composition is skewed to polar residues. The OBG-type G domain occupies 160–333 (ADVGMLGMPN…LCWDVMTFII (174 aa)). Residues 166 to 173 (GMPNAGKS), 191 to 195 (FTTLV), 213 to 216 (DIPG), 283 to 286 (NKID), and 314 to 316 (SAA) each bind GTP. Residues Ser-173 and Thr-193 each coordinate Mg(2+).

Belongs to the TRAFAC class OBG-HflX-like GTPase superfamily. OBG GTPase family. Monomer. It depends on Mg(2+) as a cofactor.

It is found in the cytoplasm. Functionally, an essential GTPase which binds GTP, GDP and possibly (p)ppGpp with moderate affinity, with high nucleotide exchange rates and a fairly low GTP hydrolysis rate. Plays a role in control of the cell cycle, stress response, ribosome biogenesis and in those bacteria that undergo differentiation, in morphogenesis control. The sequence is that of GTPase Obg from Salmonella paratyphi A (strain ATCC 9150 / SARB42).